The primary structure comprises 429 residues: Transcriptional adapter 3 (429 aa).

The stretch at 41-70 forms a coiled coil; that stretch reads IEELDTLQLELETLLSSASRRLRALEEQRQ. 3 disordered regions span residues 86–132, 208–257, and 274–308; these read KLEK…TKVQ, EERR…PFGP, and PMED…HTRS. Basic and acidic residues-rich tracts occupy residues 208–221 and 230–249; these read EERR…DKKK and LDAK…HEPP. Positions 364–404 form a coiled coil; it reads LLKLAREEMRKQELRQRVRVADNEVMEAFRRIMAARQKKRT.

It belongs to the NGG1 family.

Its subcellular location is the nucleus. Functionally, functions as a component of the PCAF complex. The PCAF complex is capable of efficiently acetylating histones in a nucleosomal context. The sequence is that of Transcriptional adapter 3 (tada3) from Danio rerio (Zebrafish).